We begin with the raw amino-acid sequence, 89 residues long: Small ribosomal subunit protein uS19 (89 aa).

The protein belongs to the universal ribosomal protein uS19 family.

In terms of biological role, protein S19 forms a complex with S13 that binds strongly to the 16S ribosomal RNA. This chain is Small ribosomal subunit protein uS19, found in Porphyromonas gingivalis (strain ATCC 33277 / DSM 20709 / CIP 103683 / JCM 12257 / NCTC 11834 / 2561).